Consider the following 274-residue polypeptide: Penicillin-insensitive murein endopeptidase (274 aa).

The N-terminal stretch at 1 to 19 (MKKTALALLALLVSSASLA) is a signal peptide. 3 disulfide bridges follow: Cys44/Cys265, Cys187/Cys235, and Cys216/Cys223. Residues His110, His113, Asp120, Asp147, His150, and His211 each contribute to the Zn(2+) site. The disordered stretch occupies residues 225-274 (DQPLPPPGDGCGAELQSWFEPPEPGTTKPEKKTPPPLPPSCQALLDEHVL).

The protein belongs to the peptidase M74 family. Dimer. The cofactor is Zn(2+).

Its subcellular location is the periplasm. In terms of biological role, murein endopeptidase that cleaves the D-alanyl-meso-2,6-diamino-pimelyl amide bond that connects peptidoglycan strands. Likely plays a role in the removal of murein from the sacculus. This is Penicillin-insensitive murein endopeptidase from Citrobacter koseri (strain ATCC BAA-895 / CDC 4225-83 / SGSC4696).